We begin with the raw amino-acid sequence, 114 residues long: MNTDVLNQQKIEELSAEIGSDNVPVLLDIFLGEMDSYIGTLTELQGSEQLLYLKEISHALKSSAASFGADRLCERAIAIDKKAKANQLQEQGMETSEMLALLHITRDAYRSWTN.

The region spanning Gly19–Asn114 is the HPt domain. Position 58 is a phosphohistidine (His58).

As to quaternary structure, monomer.

Phosphorelay protein which receives sensory signals from LuxN and LuxP and transmits them to LuxO, at low cell density. LuxN and LuxP transfer a phosphoryl group to LuxU on His-58 and this phosphoryl group is further transferred to LuxO. At high cell density, as LuxU could function to establish an equilibrium between the aspartyl-phosphate of LuxN and the aspartyl-phosphate of LuxO, LuxU transfers phosphate from LuxO to LuxN (and probably LuxP) and finally phosphate is drained from the system. In Vibrio harveyi (Beneckea harveyi), this protein is Phosphorelay protein LuxU (luxU).